We begin with the raw amino-acid sequence, 98 residues long: NADH-ubiquinone oxidoreductase chain 4L (98 aa).

Transmembrane regions (helical) follow at residues 1-21, 29-49, and 61-81; these read MTLI…GLLM, ALLC…LTIL, and IILL…LVMV.

The protein belongs to the complex I subunit 4L family. In terms of assembly, core subunit of respiratory chain NADH dehydrogenase (Complex I) which is composed of 45 different subunits.

It is found in the mitochondrion inner membrane. It catalyses the reaction a ubiquinone + NADH + 5 H(+)(in) = a ubiquinol + NAD(+) + 4 H(+)(out). Its function is as follows. Core subunit of the mitochondrial membrane respiratory chain NADH dehydrogenase (Complex I) which catalyzes electron transfer from NADH through the respiratory chain, using ubiquinone as an electron acceptor. Part of the enzyme membrane arm which is embedded in the lipid bilayer and involved in proton translocation. The chain is NADH-ubiquinone oxidoreductase chain 4L (MT-ND4L) from Eschrichtius robustus (California gray whale).